A 273-amino-acid polypeptide reads, in one-letter code: Inositol monophosphatase 1 (273 aa).

Positions 71, 91, 93, and 94 each coordinate Mg(2+). Glu71 contacts substrate. Substrate-binding positions include 93–96 (VDGT), 194–196 (GSC), and Asp221. Asp221 contacts Mg(2+).

The protein belongs to the inositol monophosphatase superfamily. It depends on Mg(2+) as a cofactor. Expressed in seedlings, flowers, young and matures green fruits. Detected in roots and stems.

It carries out the reaction a myo-inositol phosphate + H2O = myo-inositol + phosphate. Its pathway is polyol metabolism; myo-inositol biosynthesis; myo-inositol from D-glucose 6-phosphate: step 2/2. Functionally, responsible for the provision of inositol required for synthesis of phosphatidylinositol and polyphosphoinositides. This Solanum lycopersicum (Tomato) protein is Inositol monophosphatase 1 (IMP1).